Reading from the N-terminus, the 129-residue chain is ATP synthase epsilon chain (129 aa).

Belongs to the ATPase epsilon chain family. In terms of assembly, F-type ATPases have 2 components, CF(1) - the catalytic core - and CF(0) - the membrane proton channel. CF(1) has five subunits: alpha(3), beta(3), gamma(1), delta(1), epsilon(1). CF(0) has three main subunits: a, b and c.

The protein localises to the cell inner membrane. Its function is as follows. Produces ATP from ADP in the presence of a proton gradient across the membrane. The chain is ATP synthase epsilon chain from Campylobacter jejuni subsp. jejuni serotype O:6 (strain 81116 / NCTC 11828).